A 168-amino-acid chain; its full sequence is MSQTVHFQDNPVTVANVIPQAGSKAQAFTLVAKDLSDVSLSQYAGKRKVLNIFPSIDTGVCAASVRKFNQLATEVENTVVLCVSADLPFAQSRFCGAEGLSNVITLSTLRNNEFLKNYGVEIVDGPLKGLAARAVIVLDENDNVIFSQLVDEITHEPDYDAALNVLKA.

Positions 19-168 constitute a Thioredoxin domain; sequence PQAGSKAQAF…YDAALNVLKA (150 aa). C61 (cysteine sulfenic acid (-SOH) intermediate) is an active-site residue. C61 and C95 are joined by a disulfide.

It belongs to the peroxiredoxin family. Tpx subfamily. As to quaternary structure, homodimer.

It catalyses the reaction a hydroperoxide + [thioredoxin]-dithiol = an alcohol + [thioredoxin]-disulfide + H2O. Thiol-specific peroxidase that catalyzes the reduction of hydrogen peroxide and organic hydroperoxides to water and alcohols, respectively. Plays a role in cell protection against oxidative stress by detoxifying peroxides. The chain is Thiol peroxidase from Salmonella typhi.